We begin with the raw amino-acid sequence, 490 residues long: ATP synthase subunit beta (490 aa).

173–180 is an ATP binding site; the sequence is GGAGVGKT.

This sequence belongs to the ATPase alpha/beta chains family. In terms of assembly, F-type ATPases have 2 components, CF(1) - the catalytic core - and CF(0) - the membrane proton channel. CF(1) has five subunits: alpha(3), beta(3), gamma(1), delta(1), epsilon(1). CF(0) has three main subunits: a(1), b(2) and c(9-12). The alpha and beta chains form an alternating ring which encloses part of the gamma chain. CF(1) is attached to CF(0) by a central stalk formed by the gamma and epsilon chains, while a peripheral stalk is formed by the delta and b chains.

The protein localises to the cell membrane. It catalyses the reaction ATP + H2O + 4 H(+)(in) = ADP + phosphate + 5 H(+)(out). In terms of biological role, produces ATP from ADP in the presence of a proton gradient across the membrane. The catalytic sites are hosted primarily by the beta subunits. In Bifidobacterium longum subsp. infantis (strain ATCC 15697 / DSM 20088 / JCM 1222 / NCTC 11817 / S12), this protein is ATP synthase subunit beta.